The primary structure comprises 239 residues: Fatty acid metabolism regulator protein (239 aa).

One can recognise an HTH gntR-type domain in the interval 6 to 74 (QSPAGFAEEY…HGKPTKINNF (69 aa)). Positions 34 to 53 (ERELSELIGVTRTTLREVLQ) form a DNA-binding region, H-T-H motif.

Homodimer.

It is found in the cytoplasm. Its function is as follows. Multifunctional regulator of fatty acid metabolism. In Pectobacterium carotovorum subsp. carotovorum (strain PC1), this protein is Fatty acid metabolism regulator protein.